The sequence spans 118 residues: UPF0134 protein MPN_287 (118 aa).

It belongs to the UPF0134 family.

The sequence is that of UPF0134 protein MPN_287 from Mycoplasma pneumoniae (strain ATCC 29342 / M129 / Subtype 1) (Mycoplasmoides pneumoniae).